Reading from the N-terminus, the 113-residue chain is Ribonuclease P protein component (113 aa).

This sequence belongs to the RnpA family. In terms of assembly, consists of a catalytic RNA component (M1 or rnpB) and a protein subunit.

The enzyme catalyses Endonucleolytic cleavage of RNA, removing 5'-extranucleotides from tRNA precursor.. RNaseP catalyzes the removal of the 5'-leader sequence from pre-tRNA to produce the mature 5'-terminus. It can also cleave other RNA substrates such as 4.5S RNA. The protein component plays an auxiliary but essential role in vivo by binding to the 5'-leader sequence and broadening the substrate specificity of the ribozyme. The protein is Ribonuclease P protein component of Desulforamulus reducens (strain ATCC BAA-1160 / DSM 100696 / MI-1) (Desulfotomaculum reducens).